The chain runs to 695 residues: tRNA wybutosine-synthesizing protein 4 (695 aa).

S-adenosyl-L-methionine is bound by residues K38, R88, G115, 146–147, 196–197, and E224; these read DY and DL. R88 serves as the catalytic Proton donor; for both methylation and methoxycarbonylation activities. The active-site Proton acceptor; for methoxycarbonylation activity is Y229.

It belongs to the methyltransferase superfamily. LCMT family.

It is found in the cytoplasm. Its subcellular location is the mitochondrion. It catalyses the reaction 7-[(3S)-3-amino-3-carboxypropyl]wyosine(37) in tRNA(Phe) + S-adenosyl-L-methionine = 7-[(3S)-(3-amino-3-methoxycarbonyl)propyl]wyosine(37) in tRNA(Phe) + S-adenosyl-L-homocysteine. The catalysed reaction is 7-[(3S)-(3-amino-3-methoxycarbonyl)propyl]wyosine(37) in tRNA(Phe) + S-adenosyl-L-methionine + CO2 = wybutosine(37) in tRNA(Phe) + S-adenosyl-L-homocysteine + 2 H(+). It functions in the pathway tRNA modification; wybutosine-tRNA(Phe) biosynthesis. S-adenosyl-L-methionine-dependent methyltransferase that acts as a component of the wybutosine biosynthesis pathway. Wybutosine is a hyper modified guanosine with a tricyclic base found at the 3'-position adjacent to the anticodon of eukaryotic phenylalanine tRNA. Catalyzes the final 2 independent reactions, methylation of the alpha-carboxy group of wybutosine-72 to form wybutosine-58, and methoxycarbonylation of alpha-amino group of wybutosine-58 through the fixation of CO(2) to complete wybutosine. This is tRNA wybutosine-synthesizing protein 4 (PPM2) from Saccharomyces cerevisiae (strain ATCC 204508 / S288c) (Baker's yeast).